The primary structure comprises 384 residues: Alcohol dehydrogenase class-3 (384 aa).

Zn(2+) is bound by residues C48, H70, C100, C103, C106, C114, and C177.

Belongs to the zinc-containing alcohol dehydrogenase family. Class-III subfamily. Homodimer. It depends on Zn(2+) as a cofactor.

It localises to the cytoplasm. The catalysed reaction is a primary alcohol + NAD(+) = an aldehyde + NADH + H(+). It catalyses the reaction a secondary alcohol + NAD(+) = a ketone + NADH + H(+). It carries out the reaction S-(hydroxymethyl)glutathione + NADP(+) = S-formylglutathione + NADPH + H(+). The enzyme catalyses S-(hydroxymethyl)glutathione + NAD(+) = S-formylglutathione + NADH + H(+). In terms of biological role, class-III ADH is remarkably ineffective in oxidizing ethanol, but it readily catalyzes the oxidation of long-chain primary alcohols and the oxidation of S-(hydroxymethyl) glutathione. Plays a role in the calcium flux to the cytoplasm in the ASJ sensory neurons upon removal of a nitric oxide stimulus. This is Alcohol dehydrogenase class-3 from Caenorhabditis elegans.